A 266-amino-acid polypeptide reads, in one-letter code: Hydroxyethylthiazole kinase (266 aa).

Residue Met41 participates in substrate binding. Residues Arg117 and Ser163 each contribute to the ATP site. Ala190 is a binding site for substrate.

This sequence belongs to the Thz kinase family. Mg(2+) serves as cofactor.

The catalysed reaction is 5-(2-hydroxyethyl)-4-methylthiazole + ATP = 4-methyl-5-(2-phosphooxyethyl)-thiazole + ADP + H(+). It functions in the pathway cofactor biosynthesis; thiamine diphosphate biosynthesis; 4-methyl-5-(2-phosphoethyl)-thiazole from 5-(2-hydroxyethyl)-4-methylthiazole: step 1/1. Functionally, catalyzes the phosphorylation of the hydroxyl group of 4-methyl-5-beta-hydroxyethylthiazole (THZ). This is Hydroxyethylthiazole kinase from Histophilus somni (strain 129Pt) (Haemophilus somnus).